The sequence spans 421 residues: Enolase (421 aa).

A (2R)-2-phosphoglycerate-binding site is contributed by glutamine 161. Catalysis depends on glutamate 203, which acts as the Proton donor. Mg(2+)-binding residues include aspartate 240, glutamate 283, and aspartate 310. (2R)-2-phosphoglycerate contacts are provided by lysine 335, arginine 364, serine 365, and lysine 386. Lysine 335 functions as the Proton acceptor in the catalytic mechanism.

This sequence belongs to the enolase family. The cofactor is Mg(2+).

It localises to the cytoplasm. The protein resides in the secreted. It is found in the cell surface. The catalysed reaction is (2R)-2-phosphoglycerate = phosphoenolpyruvate + H2O. It functions in the pathway carbohydrate degradation; glycolysis; pyruvate from D-glyceraldehyde 3-phosphate: step 4/5. Functionally, catalyzes the reversible conversion of 2-phosphoglycerate (2-PG) into phosphoenolpyruvate (PEP). It is essential for the degradation of carbohydrates via glycolysis. This is Enolase from Sulfurimonas denitrificans (strain ATCC 33889 / DSM 1251) (Thiomicrospira denitrificans (strain ATCC 33889 / DSM 1251)).